Reading from the N-terminus, the 1489-residue chain is DNA-directed RNA polymerase subunit beta (1489 aa).

It belongs to the RNA polymerase beta chain family. As to quaternary structure, the RNAP catalytic core consists of 2 alpha, 1 beta, 1 beta' and 1 omega subunit. When a sigma factor is associated with the core the holoenzyme is formed, which can initiate transcription.

It carries out the reaction RNA(n) + a ribonucleoside 5'-triphosphate = RNA(n+1) + diphosphate. In terms of biological role, DNA-dependent RNA polymerase catalyzes the transcription of DNA into RNA using the four ribonucleoside triphosphates as substrates. In Koribacter versatilis (strain Ellin345), this protein is DNA-directed RNA polymerase subunit beta.